The sequence spans 287 residues: MPRLLPISAATLALAQLTYGWGNLGHETVAYIAQSFVASSTESFCQNILGDDSTSYLANVATWADTYKYTDAGEFSKPYHFIDAQDNPPQSCGVDYDRDCGSAGCSISAIQNYTNILLESPNGSEALNALKFVVHIIGDIHQPLHDENLEAGGNGIDVTYDGETTNLHHIWDTNMPEEAAGGYSLSVAKTYADLLTERIKTGTYSSKKDSWTDGIDIKDPVSTSMIWAADANTYVCSTVLDDGLAYINSTDLSGEYYDKSQPVFEELIAKAGYRLAAWLDLIASQPS.

An N-terminal signal peptide occupies residues 1-20 (MPRLLPISAATLALAQLTYG). A divalent metal cation contacts are provided by W21, H26, D65, and H80. Residues 21–26 (WGNLGH), 65–71 (DTYKYTD), 80–83 (HFID), and 93–98 (GVDYDR) contribute to the substrate site. Intrachain disulfides connect C92-C236 and C100-C105. 2 N-linked (GlcNAc...) asparagine glycosylation sites follow: N112 and N122. Residues H135, D139, H145, H168, and D172 each contribute to the a divalent metal cation site. A substrate binding region spans residues 135 to 183 (HIIGDIHQPLHDENLEAGGNGIDVTYDGETTNLHHIWDTNMPEEAAGGY). The N-linked (GlcNAc...) asparagine glycan is linked to N248.

The protein belongs to the nuclease type I family. As to quaternary structure, monomer. Zn(2+) is required as a cofactor.

It catalyses the reaction Endonucleolytic cleavage to 5'-phosphomononucleotide and 5'-phosphooligonucleotide end-products.. Inhibited by inorganic phosphate (Pi). Hydrolyzes only single-stranded DNA and RNA without apparent specificity for bases. This Aspergillus oryzae (strain ATCC 42149 / RIB 40) (Yellow koji mold) protein is Nuclease S1.